The following is a 431-amino-acid chain: Serine hydroxymethyltransferase (431 aa).

(6S)-5,6,7,8-tetrahydrofolate-binding positions include leucine 128 and 132–134 (GHL). At lysine 237 the chain carries N6-(pyridoxal phosphate)lysine.

The protein belongs to the SHMT family. In terms of assembly, homodimer. Pyridoxal 5'-phosphate is required as a cofactor.

It is found in the cytoplasm. The enzyme catalyses (6R)-5,10-methylene-5,6,7,8-tetrahydrofolate + glycine + H2O = (6S)-5,6,7,8-tetrahydrofolate + L-serine. The protein operates within one-carbon metabolism; tetrahydrofolate interconversion. It functions in the pathway amino-acid biosynthesis; glycine biosynthesis; glycine from L-serine: step 1/1. Catalyzes the reversible interconversion of serine and glycine with tetrahydrofolate (THF) serving as the one-carbon carrier. This reaction serves as the major source of one-carbon groups required for the biosynthesis of purines, thymidylate, methionine, and other important biomolecules. Also exhibits THF-independent aldolase activity toward beta-hydroxyamino acids, producing glycine and aldehydes, via a retro-aldol mechanism. The sequence is that of Serine hydroxymethyltransferase from Ruegeria sp. (strain TM1040) (Silicibacter sp.).